A 620-amino-acid polypeptide reads, in one-letter code: Schwann cell myelin protein (620 aa).

The signal sequence occupies residues 1–17 (MELLVLTVLLMGTGCIS). At 18–516 (APWAAWMPPK…GGLVWAKVGP (499 aa)) the chain is on the extracellular side. One can recognise an Ig-like V-type domain in the interval 28-106 (MAALSGTCVQ…RDCTLNIARL (79 aa)). Disulfide bonds link cysteine 35-cysteine 164, cysteine 40-cysteine 99, and cysteine 158-cysteine 216. N-acetylneuraminate is bound at residue arginine 117. Ig-like C2-type domains lie at 151-233 (GSEA…DVGL), 239-322 (PQVV…LRVA), 325-407 (PRAP…FNIS), and 414-495 (VLPA…NRHG). Asparagine 222 carries N-linked (GlcNAc...) asparagine glycosylation. A disulfide bridge links cysteine 260 with cysteine 304. N-linked (GlcNAc...) asparagine glycans are attached at residues asparagine 314 and asparagine 331. A disulfide bridge connects residues cysteine 346 and cysteine 391. The N-linked (GlcNAc...) asparagine glycan is linked to asparagine 405. Disulfide bonds link cysteine 420/cysteine 429 and cysteine 431/cysteine 488. An N-linked (GlcNAc...) asparagine glycan is attached at asparagine 449. The helical transmembrane segment at 517 to 536 (VGAVVAFAIVIAVVCYLSQS) threads the bilayer. Residues 537–620 (RRKKGAGSPE…PPEYAEIRVK (84 aa)) lie on the Cytoplasmic side of the membrane. Disordered regions lie at residues 539-562 (KKGAGSPEVTPVQPMAGPGGDPDL) and 583-620 (VKEGSGAPQEVTPTSHPPMKPTRGPLEDPPEYAEIRVK).

Belongs to the immunoglobulin superfamily. SIGLEC (sialic acid binding Ig-like lectin) family. As to expression, exclusively expressed by myelinating and nonmyelinating Schwann cells and oligodendrocytes.

Its subcellular location is the membrane. This chain is Schwann cell myelin protein (SMP), found in Coturnix japonica (Japanese quail).